Consider the following 344-residue polypeptide: Nicotinate-nucleotide--dimethylbenzimidazole phosphoribosyltransferase (344 aa).

Glu-310 functions as the Proton acceptor in the catalytic mechanism.

It belongs to the CobT family.

It catalyses the reaction 5,6-dimethylbenzimidazole + nicotinate beta-D-ribonucleotide = alpha-ribazole 5'-phosphate + nicotinate + H(+). The protein operates within nucleoside biosynthesis; alpha-ribazole biosynthesis; alpha-ribazole from 5,6-dimethylbenzimidazole: step 1/2. Catalyzes the synthesis of alpha-ribazole-5'-phosphate from nicotinate mononucleotide (NAMN) and 5,6-dimethylbenzimidazole (DMB). The chain is Nicotinate-nucleotide--dimethylbenzimidazole phosphoribosyltransferase from Shewanella amazonensis (strain ATCC BAA-1098 / SB2B).